Here is a 442-residue protein sequence, read N- to C-terminus: tRNA modification GTPase MnmE (442 aa).

3 residues coordinate (6S)-5-formyl-5,6,7,8-tetrahydrofolate: Arg-27, Glu-84, and Lys-124. One can recognise a TrmE-type G domain in the interval 221–366 (GLHVVIVGAP…LLDALQAFAE (146 aa)). Residues 231-236 (NAGKSS), 250-256 (SEEAGTT), and 275-278 (DTAG) contribute to the GTP site. Positions 235 and 256 each coordinate Mg(2+). (6S)-5-formyl-5,6,7,8-tetrahydrofolate is bound at residue Lys-442.

Belongs to the TRAFAC class TrmE-Era-EngA-EngB-Septin-like GTPase superfamily. TrmE GTPase family. Homodimer. Heterotetramer of two MnmE and two MnmG subunits. K(+) serves as cofactor.

It is found in the cytoplasm. Exhibits a very high intrinsic GTPase hydrolysis rate. Involved in the addition of a carboxymethylaminomethyl (cmnm) group at the wobble position (U34) of certain tRNAs, forming tRNA-cmnm(5)s(2)U34. This chain is tRNA modification GTPase MnmE, found in Brucella melitensis biotype 1 (strain ATCC 23456 / CCUG 17765 / NCTC 10094 / 16M).